Reading from the N-terminus, the 490-residue chain is GTPase Der (490 aa).

EngA-type G domains follow at residues 3 to 166 (PVVA…MEDL) and 203 to 376 (IKLA…DSST). GTP-binding positions include 9-16 (GRPNVGKS), 56-60 (DTGGI), 118-121 (NKTD), 209-216 (GRPNVGKS), 256-260 (DTAGV), and 321-324 (NKWD). The 85-residue stretch at 377-461 (RRVGTSMLTR…PIRIQFKEGE (85 aa)) folds into the KH-like domain.

Belongs to the TRAFAC class TrmE-Era-EngA-EngB-Septin-like GTPase superfamily. EngA (Der) GTPase family. Associates with the 50S ribosomal subunit.

Its function is as follows. GTPase that plays an essential role in the late steps of ribosome biogenesis. This Escherichia coli O127:H6 (strain E2348/69 / EPEC) protein is GTPase Der.